Consider the following 278-residue polypeptide: Sulfur carrier protein FdhD (278 aa).

Residue C117 is the Cysteine persulfide intermediate of the active site.

It belongs to the FdhD family.

Its subcellular location is the cytoplasm. Required for formate dehydrogenase (FDH) activity. Acts as a sulfur carrier protein that transfers sulfur from IscS to the molybdenum cofactor prior to its insertion into FDH. The chain is Sulfur carrier protein FdhD from Variovorax paradoxus (strain S110).